A 356-amino-acid chain; its full sequence is Protein-glutamate methylesterase/protein-glutamine glutaminase 2 (356 aa).

The region spanning 6–123 (KVLIVDDSAL…KQFLEESSIR (118 aa)) is the Response regulatory domain. At Asp-57 the chain carries 4-aspartylphosphate. Residues 165–356 (VQRTEKVVVV…AAAIVKACNS (192 aa)) form the CheB-type methylesterase domain. Residues Ser-177, His-203, and Asp-299 contribute to the active site.

The protein belongs to the CheB family. In terms of processing, phosphorylated by CheA. Phosphorylation of the N-terminal regulatory domain activates the methylesterase activity.

The protein localises to the cytoplasm. The enzyme catalyses [protein]-L-glutamate 5-O-methyl ester + H2O = L-glutamyl-[protein] + methanol + H(+). The catalysed reaction is L-glutaminyl-[protein] + H2O = L-glutamyl-[protein] + NH4(+). In terms of biological role, involved in chemotaxis. Part of a chemotaxis signal transduction system that modulates chemotaxis in response to various stimuli. Catalyzes the demethylation of specific methylglutamate residues introduced into the chemoreceptors (methyl-accepting chemotaxis proteins or MCP) by CheR. Also mediates the irreversible deamidation of specific glutamine residues to glutamic acid. The protein is Protein-glutamate methylesterase/protein-glutamine glutaminase 2 of Oleidesulfovibrio alaskensis (strain ATCC BAA-1058 / DSM 17464 / G20) (Desulfovibrio alaskensis).